Here is a 215-residue protein sequence, read N- to C-terminus: RNA pyrophosphohydrolase (215 aa).

In terms of domain architecture, Nudix hydrolase spans 6-149 (GFRPNVGIIL…KRDVYQLALT (144 aa)). The Nudix box motif lies at 38–59 (GGIKYGETPMQAMYRELHEETG).

The protein belongs to the Nudix hydrolase family. RppH subfamily. The cofactor is a divalent metal cation.

Its function is as follows. Accelerates the degradation of transcripts by removing pyrophosphate from the 5'-end of triphosphorylated RNA, leading to a more labile monophosphorylated state that can stimulate subsequent ribonuclease cleavage. This chain is RNA pyrophosphohydrolase, found in Burkholderia vietnamiensis (strain G4 / LMG 22486) (Burkholderia cepacia (strain R1808)).